We begin with the raw amino-acid sequence, 409 residues long: NADH-quinone oxidoreductase subunit D (409 aa).

It belongs to the complex I 49 kDa subunit family. NDH-1 is composed of 14 different subunits. Subunits NuoB, C, D, E, F, and G constitute the peripheral sector of the complex.

It localises to the cell inner membrane. It catalyses the reaction a quinone + NADH + 5 H(+)(in) = a quinol + NAD(+) + 4 H(+)(out). In terms of biological role, NDH-1 shuttles electrons from NADH, via FMN and iron-sulfur (Fe-S) centers, to quinones in the respiratory chain. The immediate electron acceptor for the enzyme in this species is believed to be ubiquinone. Couples the redox reaction to proton translocation (for every two electrons transferred, four hydrogen ions are translocated across the cytoplasmic membrane), and thus conserves the redox energy in a proton gradient. This chain is NADH-quinone oxidoreductase subunit D, found in Campylobacter concisus (strain 13826).